The sequence spans 277 residues: Transcription antiterminator LicT (277 aa).

PRD domains are found at residues 65-170 (DIPI…EEMP) and 171-277 (NIIN…VKQA).

This sequence belongs to the transcriptional antiterminator BglG family. Phosphorylated.

Functionally, mediates positive regulation of the glucanase operon (licST) by functioning as an antiterminator factor of transcription. Prevents termination at terminator lic-t. The sequence is that of Transcription antiterminator LicT (licT) from Bacillus subtilis (strain 168).